A 347-amino-acid polypeptide reads, in one-letter code: Quinolinate synthase (347 aa).

Residues H47 and S68 each coordinate iminosuccinate. C113 is a binding site for [4Fe-4S] cluster. Iminosuccinate contacts are provided by residues 139–141 (YAN) and S156. C200 serves as a coordination point for [4Fe-4S] cluster. Iminosuccinate is bound by residues 226–228 (HPE) and T243. C297 lines the [4Fe-4S] cluster pocket.

This sequence belongs to the quinolinate synthase family. Type 1 subfamily. Requires [4Fe-4S] cluster as cofactor.

The protein localises to the cytoplasm. The catalysed reaction is iminosuccinate + dihydroxyacetone phosphate = quinolinate + phosphate + 2 H2O + H(+). Its pathway is cofactor biosynthesis; NAD(+) biosynthesis; quinolinate from iminoaspartate: step 1/1. Functionally, catalyzes the condensation of iminoaspartate with dihydroxyacetone phosphate to form quinolinate. The chain is Quinolinate synthase from Salmonella gallinarum (strain 287/91 / NCTC 13346).